Here is a 223-residue protein sequence, read N- to C-terminus: Ras-related protein Rab-37 (223 aa).

Residues 1–23 form a disordered region; that stretch reads MTGTPGAVATRDGEAPERSPPCS. T2 carries the post-translational modification N-acetylthreonine. GTP is bound by residues T38, G39, V40, G41, K42, T43, C44, and T62. T43 lines the Mg(2+) pocket. Short sequence motifs (switch) lie at residues 52-67 and 85-102; these read GAFLSGTFIATVGIDF and DTAGQERFRSVTHAYYRD. Residues T62 and D85 each contribute to the Mg(2+) site. GTP-binding residues include G88, N143, K144, D146, M147, S173, A174, and K175. 2 S-geranylgeranyl cysteine lipidation sites follow: C219 and C220. A Cysteine methyl ester modification is found at C220. The propeptide at 221–223 is removed in mature form; sequence SFM.

This sequence belongs to the small GTPase superfamily. Rab family. In terms of assembly, interacts with RIMS1. Interacts (in GDP-bound form) with RPGR, RPGR functions as guanine exchange factor (GEF). Mg(2+) serves as cofactor.

It is found in the cytoplasmic vesicle. It localises to the cell projection. The protein resides in the cilium. The catalysed reaction is GTP + H2O = GDP + phosphate + H(+). With respect to regulation, regulated by guanine nucleotide exchange factors (GEFs) including RPGR which promote the exchange of bound GDP for free GTP. Regulated by GTPase activating proteins (GAPs) which increase the GTP hydrolysis activity. Inhibited by GDP dissociation inhibitors (GDIs). The small GTPases Rab are key regulators of intracellular membrane trafficking, from the formation of transport vesicles to their fusion with membranes. Rabs cycle between an inactive GDP-bound form and an active GTP-bound form that is able to recruit to membranes different sets of downstream effectors directly responsible for vesicle formation, movement, tethering and fusion. Acts as an organizer for autophagosome biogenesis in a GTP-dependent manner. Involved in retinal homeostasis by autophagy regulation. This chain is Ras-related protein Rab-37, found in Homo sapiens (Human).